The chain runs to 390 residues: Homoserine O-succinyltransferase (390 aa).

Residues 56 to 365 enclose the AB hydrolase-1 domain; the sequence is NAVLICHALS…SPHGHDAFLL (310 aa). Serine 162 (nucleophile) is an active-site residue. Arginine 232 serves as a coordination point for substrate. Residues aspartate 327 and histidine 360 contribute to the active site. Aspartate 361 lines the substrate pocket.

This sequence belongs to the AB hydrolase superfamily. MetX family. In terms of assembly, homodimer.

It localises to the cytoplasm. It carries out the reaction L-homoserine + succinyl-CoA = O-succinyl-L-homoserine + CoA. It participates in amino-acid biosynthesis; L-methionine biosynthesis via de novo pathway; O-succinyl-L-homoserine from L-homoserine: step 1/1. Its function is as follows. Transfers a succinyl group from succinyl-CoA to L-homoserine, forming succinyl-L-homoserine. In vitro, also has serine succinyl transferase activity. In Litchfieldella anticariensis (strain DSM 16096 / CECT 5854 / CIP 108499 / LMG 22089 / FP35) (Halomonas anticariensis), this protein is Homoserine O-succinyltransferase.